Reading from the N-terminus, the 141-residue chain is uncharacterized protein (141 aa).

A coiled-coil region spans residues 24–52; that stretch reads KVQTALQKEAKTIKREQKKIKDEIDTFKT.

This is an uncharacterized protein from Invertebrate iridescent virus 6 (IIV-6).